The following is a 781-amino-acid chain: Cytosolic phospholipase A2 beta (781 aa).

The region spanning 1–112 (MAVAEVSRTC…RAGEFRRESF (112 aa)) is the C2 domain. Residues Asp26, Asp32, Asp82, Asp84, and Asp90 each coordinate Ca(2+). Residues 246 to 781 (EAGLRELAVR…VQRRRQRRPH (536 aa)) form the PLA2c domain. The active-site Nucleophile is Ser335. Asp615 functions as the Proton acceptor in the catalytic mechanism.

Requires Ca(2+) as cofactor. As to expression, widely expressed. Expressed at higher level in brain, heart, liver, cerebellum and pancreas.

It localises to the cytoplasm. The protein resides in the cytosol. Its subcellular location is the mitochondrion membrane. The protein localises to the early endosome membrane. The enzyme catalyses a 1,2-diacyl-sn-glycero-3-phosphocholine + H2O = a 1-acyl-sn-glycero-3-phosphocholine + a fatty acid + H(+). The catalysed reaction is a 1-acyl-sn-glycero-3-phosphocholine + H2O = sn-glycerol 3-phosphocholine + a fatty acid + H(+). It carries out the reaction 1-hexadecanoyl-2-(9Z,12Z-octadecadienoyl)-sn-glycero-3-phosphoethanolamine + H2O = 1-hexadecanoyl-sn-glycero-3-phosphoethanolamine + (9Z,12Z)-octadecadienoate + H(+). It catalyses the reaction 1-hexadecanoyl-2-(5Z,8Z,11Z,14Z-eicosatetraenoyl)-sn-glycero-3-phosphoethanolamine + H2O = 1-hexadecanoyl-sn-glycero-3-phosphoethanolamine + (5Z,8Z,11Z,14Z)-eicosatetraenoate + H(+). The enzyme catalyses 1-hexadecanoyl-sn-glycero-3-phosphocholine + H2O = sn-glycerol 3-phosphocholine + hexadecanoate + H(+). The catalysed reaction is 1-hexadecanoyl-2-(5Z,8Z,11Z,14Z-eicosatetraenoyl)-sn-glycero-3-phosphocholine + H2O = 1-hexadecanoyl-sn-glycero-3-phosphocholine + (5Z,8Z,11Z,14Z)-eicosatetraenoate + H(+). It carries out the reaction 1-hexadecanoyl-2-(5Z,8Z,11Z,14Z-eicosatetraenoyl)-sn-glycero-3-phosphocholine + H2O = 2-(5Z,8Z,11Z,14Z)-eicosatetraenoyl-sn-glycero-3-phosphocholine + hexadecanoate + H(+). Its activity is regulated as follows. Stimulated by cytosolic Ca(2+). Its function is as follows. Calcium-dependent phospholipase A1 and A2 and lysophospholipase that may play a role in membrane phospholipid remodeling. Functionally, calcium-dependent phospholipase A2 and lysophospholipase. Cleaves the ester bond of the fatty acyl group attached to the sn-2 position of phosphatidylethanolamines, producing lysophospholipids that may be used in deacylation-reacylation cycles. Hydrolyzes lysophosphatidylcholines with low efficiency but is inefficient toward phosphatidylcholines. In terms of biological role, calcium-dependent phospholipase A1 and A2 and lysophospholipase. Cleaves the ester bond of the fatty acyl group attached to the sn-1 or sn-2 position of diacyl phospholipids (phospholipase A1 and A2 activity, respectively), producing lysophospholipids that may be used in deacylation-reacylation cycles. Can further hydrolyze lysophospholipids enabling complete deacylation. Has no activity toward alkylacyl phospholipids. The sequence is that of Cytosolic phospholipase A2 beta (PLA2G4B) from Homo sapiens (Human).